The sequence spans 296 residues: 4-hydroxy-tetrahydrodipicolinate synthase (296 aa).

Position 49 (T49) interacts with pyruvate. The Proton donor/acceptor role is filled by Y137. Catalysis depends on K166, which acts as the Schiff-base intermediate with substrate. I208 serves as a coordination point for pyruvate.

Belongs to the DapA family. In terms of assembly, homotetramer; dimer of dimers.

It localises to the cytoplasm. It carries out the reaction L-aspartate 4-semialdehyde + pyruvate = (2S,4S)-4-hydroxy-2,3,4,5-tetrahydrodipicolinate + H2O + H(+). It functions in the pathway amino-acid biosynthesis; L-lysine biosynthesis via DAP pathway; (S)-tetrahydrodipicolinate from L-aspartate: step 3/4. Catalyzes the condensation of (S)-aspartate-beta-semialdehyde [(S)-ASA] and pyruvate to 4-hydroxy-tetrahydrodipicolinate (HTPA). This is 4-hydroxy-tetrahydrodipicolinate synthase from Chlorobaculum parvum (strain DSM 263 / NCIMB 8327) (Chlorobium vibrioforme subsp. thiosulfatophilum).